A 154-amino-acid chain; its full sequence is Myoglobin (154 aa).

The Globin domain occupies 2-148 (GLSDGEWQLV…FRNDMAAKYK (147 aa)). Serine 4 carries the phosphoserine modification. Histidine 65 contributes to the nitrite binding site. Histidine 65 serves as a coordination point for O2. A Phosphothreonine modification is found at threonine 68. Heme b is bound at residue histidine 94.

Belongs to the globin family. As to quaternary structure, monomeric.

It is found in the cytoplasm. It localises to the sarcoplasm. It carries out the reaction Fe(III)-heme b-[protein] + nitric oxide + H2O = Fe(II)-heme b-[protein] + nitrite + 2 H(+). The catalysed reaction is H2O2 + AH2 = A + 2 H2O. Functionally, monomeric heme protein which primary function is to store oxygen and facilitate its diffusion within muscle tissues. Reversibly binds oxygen through a pentacoordinated heme iron and enables its timely and efficient release as needed during periods of heightened demand. Depending on the oxidative conditions of tissues and cells, and in addition to its ability to bind oxygen, it also has a nitrite reductase activity whereby it regulates the production of bioactive nitric oxide. Under stress conditions, like hypoxia and anoxia, it also protects cells against reactive oxygen species thanks to its pseudoperoxidase activity. The polypeptide is Myoglobin (MB) (Ochotona princeps (Southern American pika)).